A 460-amino-acid polypeptide reads, in one-letter code: G-protein coupled receptor 22 (460 aa).

Over 1 to 74 (MESMPSSLTH…YPVSFQVSLT (74 aa)) the chain is Cytoplasmic. The helical transmembrane segment at 75–95 (GFLMLEIVLGLSSNLTVLALY) threads the bilayer. Residues 96-114 (CMKSNLVSSVSNIVTMNLH) lie on the Extracellular side of the membrane. Residues 115–135 (VLDVLVCVGCIPLTIVVVLLP) form a helical membrane-spanning segment. Residues 136–144 (LEGNNALIC) lie on the Cytoplasmic side of the membrane. A helical membrane pass occupies residues 145 to 165 (CFHEACVSFASVATAANVLAI). Residues 166–185 (TLDRYDISVRPANRVLTMGR) lie on the Extracellular side of the membrane. The helical transmembrane segment at 186–206 (AVALLGSIWALSFFSFLVPFI) threads the bilayer. Topologically, residues 207-235 (EEGFFSQAGNERNQTEAEEPSNEYYTELG) are cytoplasmic. A helical membrane pass occupies residues 236–256 (LYYHLLAQIPIFFFTAVVMLV). Over 257–343 (TYYKILQALN…ERQKRVFRMS (87 aa)) the chain is Extracellular. Basic residues predominate over residues 276-286 (VPKKKPRKKKT). The segment at 276–309 (VPKKKPRKKKTISMTSTQPESTDASQSSAGRNAP) is disordered. Polar residues predominate over residues 287-305 (ISMTSTQPESTDASQSSAG). The helical transmembrane segment at 344–364 (LLIISTFLLCWTPITVLNTVI) threads the bilayer. The Cytoplasmic portion of the chain corresponds to 365-377 (LSVGPSNFTVRLR). Residues 378–398 (LGFLVMAYGTTIFHPLLYAFT) traverse the membrane as a helical segment. The Extracellular portion of the chain corresponds to 399 to 460 (RQKFQKVLKS…QKCLSSEDVE (62 aa)).

The protein belongs to the G-protein coupled receptor 1 family.

It is found in the cell membrane. Orphan G-protein coupled receptor that regulates cilia length and structure in the Kupffer's vesicle leading to the left-right asymmetry development by establishing a directional fluid flow. The protein is G-protein coupled receptor 22 (gpr22a) of Danio rerio (Zebrafish).